A 297-amino-acid polypeptide reads, in one-letter code: MADLTWHDALDPEQAEEITRLLAEAEEVDGVAPVGEAVHLRLRPGASGSAHLLARADGVLAGYAHLDLLGDSDGNLVAELAVRPGSRRAGVGSELAGALLGAAADRGKPVRFWAHGDREGASGLAARLGARRVRELWVMRRELAGLPEVPPLPEGVALRSFEPGRDEDAVVRVNARAFSWHPEQGAMTADDVRLKEAEDWFDADGFLLAVDGADRLLGFHWTKRHDESMGEVYVVGVDPDAQGGGLGKALTLAGLVHLKSTGLRDVHLYVESDNSPAVRVYTRLGFSRWKADVQYAL.

2 N-acetyltransferase domains span residues 8–153 (DALD…PPLP) and 156–297 (VALR…QYAL). Glutamate 36 serves as a coordination point for 1D-myo-inositol 2-(L-cysteinylamino)-2-deoxy-alpha-D-glucopyranoside. 80 to 82 (LAV) contributes to the acetyl-CoA binding site. Positions 183, 223, and 231 each coordinate 1D-myo-inositol 2-(L-cysteinylamino)-2-deoxy-alpha-D-glucopyranoside. Residues 235–237 (VGV) and 242–248 (QGGGLGK) contribute to the acetyl-CoA site. A 1D-myo-inositol 2-(L-cysteinylamino)-2-deoxy-alpha-D-glucopyranoside-binding site is contributed by tyrosine 269. Residue 274-279 (NSPAVR) participates in acetyl-CoA binding.

This sequence belongs to the acetyltransferase family. MshD subfamily. As to quaternary structure, monomer.

The catalysed reaction is 1D-myo-inositol 2-(L-cysteinylamino)-2-deoxy-alpha-D-glucopyranoside + acetyl-CoA = mycothiol + CoA + H(+). Catalyzes the transfer of acetyl from acetyl-CoA to desacetylmycothiol (Cys-GlcN-Ins) to form mycothiol. The chain is Mycothiol acetyltransferase from Actinosynnema mirum (strain ATCC 29888 / DSM 43827 / JCM 3225 / NBRC 14064 / NCIMB 13271 / NRRL B-12336 / IMRU 3971 / 101).